The following is an 81-amino-acid chain: Sec-independent protein translocase protein TatA (81 aa).

Residues 1–21 (MGSLSLWHWIIVGAVLLLLFG) traverse the membrane as a helical segment. Residues 41 to 81 (KKGLSEDDEKPEAARPAEPARSLDHQPVAEQPKVSETHRIG) form a disordered region.

The protein belongs to the TatA/E family. In terms of assembly, the Tat system comprises two distinct complexes: a TatABC complex, containing multiple copies of TatA, TatB and TatC subunits, and a separate TatA complex, containing only TatA subunits. Substrates initially bind to the TatABC complex, which probably triggers association of the separate TatA complex to form the active translocon.

Its subcellular location is the cell inner membrane. Functionally, part of the twin-arginine translocation (Tat) system that transports large folded proteins containing a characteristic twin-arginine motif in their signal peptide across membranes. TatA could form the protein-conducting channel of the Tat system. The chain is Sec-independent protein translocase protein TatA from Beijerinckia indica subsp. indica (strain ATCC 9039 / DSM 1715 / NCIMB 8712).